The chain runs to 223 residues: Transcriptional regulatory protein HprR (223 aa).

The region spanning 2 to 115 is the Response regulatory domain; that stretch reads KILLIEDNQR…ELLARVRAQL (114 aa). The residue at position 51 (aspartate 51) is a 4-aspartylphosphate. A DNA-binding region (ompR/PhoB-type) is located at residues 122-220; that stretch reads NSTLEISGLR…IRGMGYSFVA (99 aa).

Phosphorylated by HprS.

Its subcellular location is the cytoplasm. Member of a two-component regulatory system HprR/HprS involved in response to hydrogen peroxide. Regulates the expression of at least 5 operons, cyoABCDE, hprRS, hiuH, cusRS and cusCFBA. Bifunctional regulator that acts as an activator and a repressor. The polypeptide is Transcriptional regulatory protein HprR (Escherichia coli (strain K12)).